Consider the following 267-residue polypeptide: 3-deoxy-manno-octulosonate cytidylyltransferase (267 aa).

Belongs to the KdsB family.

It is found in the cytoplasm. It carries out the reaction 3-deoxy-alpha-D-manno-oct-2-ulosonate + CTP = CMP-3-deoxy-beta-D-manno-octulosonate + diphosphate. It functions in the pathway nucleotide-sugar biosynthesis; CMP-3-deoxy-D-manno-octulosonate biosynthesis; CMP-3-deoxy-D-manno-octulosonate from 3-deoxy-D-manno-octulosonate and CTP: step 1/1. The protein operates within bacterial outer membrane biogenesis; lipopolysaccharide biosynthesis. Its function is as follows. Activates KDO (a required 8-carbon sugar) for incorporation into bacterial lipopolysaccharide in Gram-negative bacteria. The chain is 3-deoxy-manno-octulosonate cytidylyltransferase from Paraburkholderia phymatum (strain DSM 17167 / CIP 108236 / LMG 21445 / STM815) (Burkholderia phymatum).